A 129-amino-acid polypeptide reads, in one-letter code: UPF0325 protein YE3288 (129 aa).

This sequence belongs to the UPF0325 family.

This Yersinia enterocolitica serotype O:8 / biotype 1B (strain NCTC 13174 / 8081) protein is UPF0325 protein YE3288.